The following is a 1027-amino-acid chain: A-factor-processing enzyme (1027 aa).

H118 contacts Zn(2+). E121 functions as the Proton acceptor in the catalytic mechanism. The Zn(2+) site is built by H122 and E199.

It belongs to the peptidase M16 family. Zn(2+) is required as a cofactor.

It localises to the membrane. Its activity is regulated as follows. Inhibited by chelating agents like EDTA, TPEN and 1,1-phenanthroline, as well as NEM, free cysteine and DTT. Functionally, involved in the N-terminal endoproteolytic cleavage of the P2 precursor of the a-factor mating pheromone. Capable of proteolysing the established mammalian insulin-degrading enzymes (IDEs) substrates amyloid-beta peptide and insulin B-chain. In Saccharomyces cerevisiae (strain ATCC 204508 / S288c) (Baker's yeast), this protein is A-factor-processing enzyme (STE23).